Consider the following 449-residue polypeptide: Glucose-6-phosphate isomerase (449 aa).

Residue Glu291 is the Proton donor of the active site. Residues His312 and Lys426 contribute to the active site.

This sequence belongs to the GPI family.

The protein resides in the cytoplasm. The enzyme catalyses alpha-D-glucose 6-phosphate = beta-D-fructose 6-phosphate. Its pathway is carbohydrate biosynthesis; gluconeogenesis. It functions in the pathway carbohydrate degradation; glycolysis; D-glyceraldehyde 3-phosphate and glycerone phosphate from D-glucose: step 2/4. In terms of biological role, catalyzes the reversible isomerization of glucose-6-phosphate to fructose-6-phosphate. This Streptococcus pyogenes serotype M4 (strain MGAS10750) protein is Glucose-6-phosphate isomerase.